The chain runs to 554 residues: Urocanate hydratase (554 aa).

NAD(+) contacts are provided by residues 51–52, glutamine 129, 175–177, glutamate 195, arginine 200, 241–242, 262–266, 272–273, and tyrosine 321; these read GG, GMG, NA, QTSAH, and YL. Cysteine 409 is a catalytic residue. Glycine 491 lines the NAD(+) pocket.

The protein belongs to the urocanase family. NAD(+) serves as cofactor.

The protein resides in the cytoplasm. The catalysed reaction is 4-imidazolone-5-propanoate = trans-urocanate + H2O. Its pathway is amino-acid degradation; L-histidine degradation into L-glutamate; N-formimidoyl-L-glutamate from L-histidine: step 2/3. Catalyzes the conversion of urocanate to 4-imidazolone-5-propionate. This is Urocanate hydratase from Caulobacter sp. (strain K31).